A 255-amino-acid polypeptide reads, in one-letter code: Hydroxyacylglutathione hydrolase (255 aa).

His53, His55, Asp57, His58, His110, Asp127, and His165 together coordinate Zn(2+).

Belongs to the metallo-beta-lactamase superfamily. Glyoxalase II family. As to quaternary structure, monomer. Zn(2+) is required as a cofactor.

The enzyme catalyses an S-(2-hydroxyacyl)glutathione + H2O = a 2-hydroxy carboxylate + glutathione + H(+). Its pathway is secondary metabolite metabolism; methylglyoxal degradation; (R)-lactate from methylglyoxal: step 2/2. Its function is as follows. Thiolesterase that catalyzes the hydrolysis of S-D-lactoyl-glutathione to form glutathione and D-lactic acid. The protein is Hydroxyacylglutathione hydrolase of Xanthomonas euvesicatoria pv. vesicatoria (strain 85-10) (Xanthomonas campestris pv. vesicatoria).